Here is a 339-residue protein sequence, read N- to C-terminus: UDP-N-acetylenolpyruvoylglucosamine reductase (339 aa).

The region spanning 18–189 (GVEVKAKWFA…LRVRFALNRV (172 aa)) is the FAD-binding PCMH-type domain. R166 is an active-site residue. S239 (proton donor) is an active-site residue. E335 is an active-site residue.

The protein belongs to the MurB family. It depends on FAD as a cofactor.

It is found in the cytoplasm. It carries out the reaction UDP-N-acetyl-alpha-D-muramate + NADP(+) = UDP-N-acetyl-3-O-(1-carboxyvinyl)-alpha-D-glucosamine + NADPH + H(+). Its pathway is cell wall biogenesis; peptidoglycan biosynthesis. Functionally, cell wall formation. This chain is UDP-N-acetylenolpyruvoylglucosamine reductase, found in Pseudomonas fluorescens (strain ATCC BAA-477 / NRRL B-23932 / Pf-5).